Reading from the N-terminus, the 156-residue chain is Small ribosomal subunit protein uS7 (156 aa).

Belongs to the universal ribosomal protein uS7 family. Part of the 30S ribosomal subunit. Contacts proteins S9 and S11.

In terms of biological role, one of the primary rRNA binding proteins, it binds directly to 16S rRNA where it nucleates assembly of the head domain of the 30S subunit. Is located at the subunit interface close to the decoding center, probably blocks exit of the E-site tRNA. In Paraburkholderia phymatum (strain DSM 17167 / CIP 108236 / LMG 21445 / STM815) (Burkholderia phymatum), this protein is Small ribosomal subunit protein uS7.